The following is a 346-amino-acid chain: Holliday junction branch migration complex subunit RuvB (346 aa).

The segment at 2–183 is large ATPase domain (RuvB-L); it reads TDDRIIGAGA…FGIVQRLEFY (182 aa). ATP contacts are provided by residues isoleucine 22, arginine 23, glycine 64, lysine 67, threonine 68, threonine 69, 130–132, arginine 173, tyrosine 183, and arginine 220; that span reads EDF. Residue threonine 68 participates in Mg(2+) binding. Residues 184–254 form a small ATPAse domain (RuvB-S) region; the sequence is SVEELTRIVR…VAQAAMKMLK (71 aa). The head domain (RuvB-H) stretch occupies residues 257 to 346; sequence PEGFDELDRR…DLFAEVPDVG (90 aa). Residues arginine 293, arginine 312, and arginine 317 each coordinate DNA.

This sequence belongs to the RuvB family. Homohexamer. Forms an RuvA(8)-RuvB(12)-Holliday junction (HJ) complex. HJ DNA is sandwiched between 2 RuvA tetramers; dsDNA enters through RuvA and exits via RuvB. An RuvB hexamer assembles on each DNA strand where it exits the tetramer. Each RuvB hexamer is contacted by two RuvA subunits (via domain III) on 2 adjacent RuvB subunits; this complex drives branch migration. In the full resolvosome a probable DNA-RuvA(4)-RuvB(12)-RuvC(2) complex forms which resolves the HJ.

It localises to the cytoplasm. It catalyses the reaction ATP + H2O = ADP + phosphate + H(+). Functionally, the RuvA-RuvB-RuvC complex processes Holliday junction (HJ) DNA during genetic recombination and DNA repair, while the RuvA-RuvB complex plays an important role in the rescue of blocked DNA replication forks via replication fork reversal (RFR). RuvA specifically binds to HJ cruciform DNA, conferring on it an open structure. The RuvB hexamer acts as an ATP-dependent pump, pulling dsDNA into and through the RuvAB complex. RuvB forms 2 homohexamers on either side of HJ DNA bound by 1 or 2 RuvA tetramers; 4 subunits per hexamer contact DNA at a time. Coordinated motions by a converter formed by DNA-disengaged RuvB subunits stimulates ATP hydrolysis and nucleotide exchange. Immobilization of the converter enables RuvB to convert the ATP-contained energy into a lever motion, pulling 2 nucleotides of DNA out of the RuvA tetramer per ATP hydrolyzed, thus driving DNA branch migration. The RuvB motors rotate together with the DNA substrate, which together with the progressing nucleotide cycle form the mechanistic basis for DNA recombination by continuous HJ branch migration. Branch migration allows RuvC to scan DNA until it finds its consensus sequence, where it cleaves and resolves cruciform DNA. The protein is Holliday junction branch migration complex subunit RuvB of Stenotrophomonas maltophilia (strain K279a).